Reading from the N-terminus, the 462-residue chain is L-seryl-tRNA(Sec) selenium transferase (462 aa).

Residue lysine 292 is modified to N6-(pyridoxal phosphate)lysine.

The protein belongs to the SelA family. Pyridoxal 5'-phosphate is required as a cofactor.

It localises to the cytoplasm. The enzyme catalyses L-seryl-tRNA(Sec) + selenophosphate + H(+) = L-selenocysteinyl-tRNA(Sec) + phosphate. The protein operates within aminoacyl-tRNA biosynthesis; selenocysteinyl-tRNA(Sec) biosynthesis; selenocysteinyl-tRNA(Sec) from L-seryl-tRNA(Sec) (bacterial route): step 1/1. In terms of biological role, converts seryl-tRNA(Sec) to selenocysteinyl-tRNA(Sec) required for selenoprotein biosynthesis. The protein is L-seryl-tRNA(Sec) selenium transferase of Geobacter sulfurreducens (strain ATCC 51573 / DSM 12127 / PCA).